We begin with the raw amino-acid sequence, 584 residues long: MSTICAGGQTLESKYGGRAPPQIQLPDRQWPSKKLTESPIWLSTDLRDGNQALPNPMTTSQKWQMFRLLVDIGFKQIEVSFPCASDTEYTFTRALVETPGAVPDDVSLEVMTPCRKETLVRAVESLKGAKKAILFTYLATSDNYRETILQRSEAETLEHVRDCIEYARAITKEDPEARQTEWSLGFGMEDFANARPDAALRLAEVIQAAWQPSRENPVILGLASSVEAATVNIFADQVEYFSRHLSSRETVCISIHTHNDRGGAAAAAELACLAGGDRVEGCLFGNGERAGNLDLVTAAMNCFTQGMETGLDFSNLPEIRRVYESITQLPVHPRTPYSGDYYFRAFSGAHQDAIRKGLQKRAANSSKSPWKVPYLPLDPADLGVSFDNVIGVNSQSGKGGVAWLIQNGLALSIPTQLAASFSHVVKEQSVAQERGLAAEEICALFADRYDLRDSPSGRVVREHGYIAAFQHPGCALELEDVTEQAARAAGILTRGLDFLLRCTRAASHPLGGPDDSNLTVAFVQCAVTEKAEEAWGIGIGFSQDSAIDRALLSVMNRHYQPTPIRAPLATNDSVIPRPEPIRGG.

The 279-residue stretch at 39-317 folds into the Pyruvate carboxyltransferase domain; the sequence is PIWLSTDLRD…ETGLDFSNLP (279 aa).

This sequence belongs to the alpha-IPM synthase/homocitrate synthase family. LeuA type 2 subfamily.

The catalysed reaction is 3-methyl-2-oxobutanoate + acetyl-CoA + H2O = (2S)-2-isopropylmalate + CoA + H(+). Its pathway is antifungal biosynthesis. Isopropyl malate synthase; part of the gene cluster that mediates the de novo generation of L-homotyrosine from acetyl-CoA and 4-hydroxyphenyl-pyruvate. L-homotyrosine is a building block of echinocandin B, a fungal lipidated cyclic hexapeptide that acts as an antifungal agent. L-homotyrosine 4-hydroxyphenyl-pyruvate first undergoes an aldol-type condensation by htyA with the C-2 of acetyl-CoA followed by the release of CoA to form 2-(4-hydroxybenzyl)-malate. This is followed by isomerization of 2-(4-hydroxy-benzyl)-malate to 3-(4-hydroxybenzyl)-malate by htyD. Thereafter, 3-(4-hydroxybenzyl)-malate undergoes decarboxylation and oxidation to form 2-oxo-4-(4-hydroxybenzyl)butanoic acid, coupled to reduction of NAD(+) to NADH by htyC. The product then undergoes transamination catalyzed by htyB to form L-homotyrosine. This chain is Isopropyl malate synthase htyA, found in Aspergillus rugulosus (Emericella rugulosa).